The following is a 610-amino-acid chain: Elongation factor 4 (610 aa).

The tr-type G domain maps to 11–193 (KYIRNFSIVA…QIVTKIPAPA (183 aa)). GTP is bound by residues 23–28 (DHGKST) and 140–143 (NKID).

Belongs to the TRAFAC class translation factor GTPase superfamily. Classic translation factor GTPase family. LepA subfamily.

It is found in the cell membrane. It carries out the reaction GTP + H2O = GDP + phosphate + H(+). Required for accurate and efficient protein synthesis under certain stress conditions. May act as a fidelity factor of the translation reaction, by catalyzing a one-codon backward translocation of tRNAs on improperly translocated ribosomes. Back-translocation proceeds from a post-translocation (POST) complex to a pre-translocation (PRE) complex, thus giving elongation factor G a second chance to translocate the tRNAs correctly. Binds to ribosomes in a GTP-dependent manner. This Levilactobacillus brevis (strain ATCC 367 / BCRC 12310 / CIP 105137 / JCM 1170 / LMG 11437 / NCIMB 947 / NCTC 947) (Lactobacillus brevis) protein is Elongation factor 4.